The following is a 275-amino-acid chain: 4-diphosphocytidyl-2-C-methyl-D-erythritol kinase (275 aa).

The active site involves K14. 94-104 is an ATP binding site; that stretch reads PMEAGLGGGSA. D134 is an active-site residue.

Belongs to the GHMP kinase family. IspE subfamily.

It carries out the reaction 4-CDP-2-C-methyl-D-erythritol + ATP = 4-CDP-2-C-methyl-D-erythritol 2-phosphate + ADP + H(+). It functions in the pathway isoprenoid biosynthesis; isopentenyl diphosphate biosynthesis via DXP pathway; isopentenyl diphosphate from 1-deoxy-D-xylulose 5-phosphate: step 3/6. Functionally, catalyzes the phosphorylation of the position 2 hydroxy group of 4-diphosphocytidyl-2C-methyl-D-erythritol. In Thermosipho africanus (strain TCF52B), this protein is 4-diphosphocytidyl-2-C-methyl-D-erythritol kinase.